Reading from the N-terminus, the 607-residue chain is All-trans-retinol 13,14-reductase (607 aa).

The first 22 residues, 1-22 (MWFAVVAIFLALVAFLYRYVVG), serve as a signal peptide directing secretion.

This sequence belongs to the carotenoid/retinoid oxidoreductase family. CrtISO subfamily. The cofactor is NAD(+). NADP(+) is required as a cofactor. FAD serves as cofactor.

It is found in the endoplasmic reticulum membrane. The catalysed reaction is all-trans-13,14-dihydroretinol + A = all-trans-retinol + AH2. Functionally, catalyzes the saturation of all-trans-retinol to all-trans-13,14-dihydroretinol. In addition, saturates the 7-8 double bond of all-trans-retinol to produce all-trans-7,8-dihydroretinol. Can also use vitamin A2 (all-trans-3,4-didehydroretinol) as a substrate, to produce all-trans-13,14-dihydro-3,4-didehydroretinol or all-trans-7,8-dihydro-3,4-didehydroretinol. May play a role in vitamin A metabolism. This is All-trans-retinol 13,14-reductase from Danio rerio (Zebrafish).